Consider the following 198-residue polypeptide: Putative NADH dehydrogenase/NAD(P)H nitroreductase XOO4267 (198 aa).

This sequence belongs to the nitroreductase family. HadB/RutE subfamily. The cofactor is FMN.

In Xanthomonas oryzae pv. oryzae (strain KACC10331 / KXO85), this protein is Putative NADH dehydrogenase/NAD(P)H nitroreductase XOO4267.